The sequence spans 192 residues: A-type ATP synthase subunit E (192 aa).

The protein belongs to the V-ATPase E subunit family. As to quaternary structure, has multiple subunits with at least A(3), B(3), C, D, E, F, H, I and proteolipid K(x).

The protein localises to the cell membrane. Component of the A-type ATP synthase that produces ATP from ADP in the presence of a proton gradient across the membrane. The protein is A-type ATP synthase subunit E of Methanocorpusculum labreanum (strain ATCC 43576 / DSM 4855 / Z).